A 372-amino-acid polypeptide reads, in one-letter code: Tetraacyldisaccharide 4'-kinase (372 aa).

60 to 67 serves as a coordination point for ATP; sequence TVGGSGKT.

The protein belongs to the LpxK family.

It carries out the reaction a lipid A disaccharide + ATP = a lipid IVA + ADP + H(+). It functions in the pathway glycolipid biosynthesis; lipid IV(A) biosynthesis; lipid IV(A) from (3R)-3-hydroxytetradecanoyl-[acyl-carrier-protein] and UDP-N-acetyl-alpha-D-glucosamine: step 6/6. Functionally, transfers the gamma-phosphate of ATP to the 4'-position of a tetraacyldisaccharide 1-phosphate intermediate (termed DS-1-P) to form tetraacyldisaccharide 1,4'-bis-phosphate (lipid IVA). The protein is Tetraacyldisaccharide 4'-kinase of Psychrobacter cryohalolentis (strain ATCC BAA-1226 / DSM 17306 / VKM B-2378 / K5).